Reading from the N-terminus, the 101-residue chain is Small ribosomal subunit protein uS14 (101 aa).

This sequence belongs to the universal ribosomal protein uS14 family. In terms of assembly, part of the 30S ribosomal subunit. Contacts proteins S3 and S10.

Its function is as follows. Binds 16S rRNA, required for the assembly of 30S particles and may also be responsible for determining the conformation of the 16S rRNA at the A site. This Orientia tsutsugamushi (strain Boryong) (Rickettsia tsutsugamushi) protein is Small ribosomal subunit protein uS14.